The chain runs to 353 residues: Aliphatic aldoxime dehydratase (353 aa).

An aliphatic aldoxime is bound at residue serine 219. A heme b-binding site is contributed by histidine 299. Residue histidine 320 coordinates an aliphatic aldoxime. Histidine 320 is an active-site residue.

The protein belongs to the heme-containing dehydratase family. Homodimer. The cofactor is heme b.

It carries out the reaction an aliphatic aldoxime = a nitrile + H2O. With respect to regulation, active when the heme iron is in the ferrous state. Activated by FMN, Fe(2+), Sn(2+), Na(2)SO(3), Na(2)S and vitamin K3. Its function is as follows. Catalyzes the dehydration of aldoximes to their corresponding nitrile. Is active toward various arylalkyl- and alkyl-aldoximes, and to a lesser extent toward aryl-aldoximes. This chain is Aliphatic aldoxime dehydratase, found in Rhodococcus globerulus.